A 149-amino-acid polypeptide reads, in one-letter code: Transcriptional repressor NrdR (149 aa).

A zinc finger spans residues 3 to 33; it reads CPFCSSEDTKVVDSRTTIDGSTKRRRECNNC. Residues 48 to 138 form the ATP-cone domain; sequence IYVVKKDNRR…VYKEFDDIKS (91 aa).

It belongs to the NrdR family. The cofactor is Zn(2+).

In terms of biological role, negatively regulates transcription of bacterial ribonucleotide reductase nrd genes and operons by binding to NrdR-boxes. The chain is Transcriptional repressor NrdR from Fusobacterium nucleatum subsp. nucleatum (strain ATCC 25586 / DSM 15643 / BCRC 10681 / CIP 101130 / JCM 8532 / KCTC 2640 / LMG 13131 / VPI 4355).